Consider the following 38-residue polypeptide: Potassium channel toxin alpha-KTx 2.3 (38 aa).

Intrachain disulfides connect cysteine 7/cysteine 29, cysteine 13/cysteine 34, and cysteine 17/cysteine 36.

This sequence belongs to the short scorpion toxin superfamily. Potassium channel inhibitor family. Alpha-KTx 02 subfamily. Expressed by the venom gland.

Its subcellular location is the secreted. Inhibitor of voltage-gated potassium channels (Kv). It is capable of displacing the binding of radio-labeled noxiustoxin (AC P08815) to rat brain synaptosomes with high affinity (about 100 pM). It is also capable of inhibiting transient potassium-currents (resembling I(A)-type currents), in cultured rat cerebellar granule cells. About 50% of the peak currents are reduced by application of a 1.5 uM solution of this toxin. The polypeptide is Potassium channel toxin alpha-KTx 2.3 (Centruroides limpidus (Mexican scorpion)).